Here is a 306-residue protein sequence, read N- to C-terminus: Elongation factor Ts (306 aa).

Positions 79–82 (TDFV) are involved in Mg(2+) ion dislocation from EF-Tu.

It belongs to the EF-Ts family.

The protein localises to the cytoplasm. Associates with the EF-Tu.GDP complex and induces the exchange of GDP to GTP. It remains bound to the aminoacyl-tRNA.EF-Tu.GTP complex up to the GTP hydrolysis stage on the ribosome. The sequence is that of Elongation factor Ts from Mesorhizobium japonicum (strain LMG 29417 / CECT 9101 / MAFF 303099) (Mesorhizobium loti (strain MAFF 303099)).